We begin with the raw amino-acid sequence, 416 residues long: tRNA(Met) cytidine acetate ligase (416 aa).

ATP contacts are provided by residues 7 to 20 (VVEYNPFHNGHLYH), G101, N163, and R188.

The protein belongs to the TmcAL family.

It localises to the cytoplasm. It carries out the reaction cytidine(34) in elongator tRNA(Met) + acetate + ATP = N(4)-acetylcytidine(34) in elongator tRNA(Met) + AMP + diphosphate. Functionally, catalyzes the formation of N(4)-acetylcytidine (ac(4)C) at the wobble position of elongator tRNA(Met), using acetate and ATP as substrates. First activates an acetate ion to form acetyladenylate (Ac-AMP) and then transfers the acetyl group to tRNA to form ac(4)C34. This is tRNA(Met) cytidine acetate ligase from Bacillus licheniformis (strain ATCC 14580 / DSM 13 / JCM 2505 / CCUG 7422 / NBRC 12200 / NCIMB 9375 / NCTC 10341 / NRRL NRS-1264 / Gibson 46).